The primary structure comprises 58 residues: DNA-directed RNA polymerases I, II, and III subunit RPABC4 (58 aa).

Positions 19, 22, 36, and 39 each coordinate Zn(2+). Residues 19–39 (CGECHTENEIKSRDPIRCREC) form a C4-type zinc finger.

Belongs to the archaeal Rpo12/eukaryotic RPC10 RNA polymerase subunit family. As to quaternary structure, component of the RNA polymerase I (Pol I), RNA polymerase II (Pol II) and RNA polymerase III (Pol III) complexes consisting of at least 13, 12 and 17 subunits, respectively. Pol I complex consists of a ten-subunit catalytic core composed of POLR1A/RPA1, POLR1B/RPA2, POLR1C/RPAC1, POLR1D/RPAC2, POLR1H/RPA12, POLR2E/RPABC1, POLR2F/RPABC2, POLR2H/RPABC3, POLR2K/RPABC4 and POLR2L/RPABC5; a mobile stalk subunit POLR1F/RPA43 protruding from the core and additional subunits homologous to general transcription factors POLR1E/RPA49 and POLR1G/RPA34. Part of Pol I pre-initiation complex (PIC), in which Pol I core assembles with RRN3 and promoter-bound UTBF and SL1/TIF-IB complex. Pol II complex contains a ten-subunit catalytic core composed of POLR2A/RPB1, POLR2B/RPB2, POLR2C/RPB3, POLR2I/RPB9, POLR2J/RPB11, POLR2E/RPABC1, POLR2F/RPABC2, POLR2H/RPABC3, POLR2K/RPABC4 and POLR2L/RPABC5 and a mobile stalk composed of two subunits POLR2D/RPB4 and POLR2G/RPB7. Part of Pol II(G) complex, in which Pol II core associates with an additional subunit POLR2M; unlike conventional Pol II, Pol II(G) functions as a transcriptional repressor. Part of TBP-based Pol II pre-initiation complex (PIC), in which Pol II core assembles with general transcription factors and other specific initiation factors including GTF2E1, GTF2E2, GTF2F1, GTF2F2, TCEA1, ERCC2, ERCC3, GTF2H2, GTF2H3, GTF2H4, GTF2H5, GTF2A1, GTF2A2, GTF2B and TBP; this large multi-subunit PIC complex mediates DNA unwinding and targets Pol II core to the transcription start site where the first phosphodiester bond forms. Pol III complex consists of a ten-subunit catalytic core composed of POLR3A/RPC1, POLR3B/RPC2, POLR1C/RPAC1, POLR1D/RPAC2, POLR3K/RPC10, POLR2E/RPABC1, POLR2F/RPABC2, POLR2H/RPABC3, POLR2K/RPABC4 and POLR2L/RPABC5; a mobile stalk composed of two subunits POLR3H/RPC8 and CRCP/RPC9, protruding from the core and functioning primarily in transcription initiation; and additional subunits homologous to general transcription factors of the RNA polymerase II machinery, POLR3C/RPC3-POLR3F/RPC6-POLR3G/RPC7 heterotrimer required for transcription initiation and POLR3D/RPC4-POLR3E/RPC5 heterodimer involved in both transcription initiation and termination.

Its subcellular location is the nucleus. The protein resides in the nucleolus. DNA-dependent RNA polymerase catalyzes the transcription of DNA into RNA using the four ribonucleoside triphosphates as substrates. Common component of RNA polymerases I, II and III which synthesize ribosomal RNA precursors, mRNA precursors and many functional non-coding RNAs, and a small RNAs, such as 5S rRNA and tRNAs, respectively. This is DNA-directed RNA polymerases I, II, and III subunit RPABC4 (Polr2k) from Mus musculus (Mouse).